Reading from the N-terminus, the 373-residue chain is Core trichothecene cluster (CTC) protein 14 (373 aa).

It belongs to the TRI14 family.

Functionally, part of the core gene cluster that mediates the biosynthesis of trichothecenes, a very large family of chemically related bicyclic sesquiterpene compounds acting as mycotoxins, including T2-toxin. The biosynthesis of trichothecenes begins with the cyclization of farnesyl diphosphate to trichodiene and is catalyzed by the trichodiene synthase TRI5. Trichodiene undergoes a series of oxygenations catalyzed by the cytochrome P450 monooxygenase TRI4. TRI4 controls the addition of four oxygens at C-2, C-3, C-11, and the C-12, C-13-epoxide to form the intermediate isotrichotriol. Isotrichotriol then undergoes a non-enzymatic isomerization and cyclization to form isotrichodermol. During this process, the oxygen at the C-2 position becomes the pyran ring oxygen and the hydroxyl group at C-11 is lost. More complex type A trichothecenes are built by modifying isotrichodermol through a series of paired hydroxylation and acetylation or acylation steps. Isotrichodermol is converted to isotrichodermin by the acetyltransferase TRI101. TRI101 encodes a C-3 transacetylase that acts as a self-protection or resistance factor during biosynthesis and that the presence of a free C-3 hydroxyl group is a key component of Fusarium trichothecene phytotoxicity. A second hydroxyl group is added to C-15 by the trichothecene C-15 hydroxylase TRI11, producing 15-decalonectrin, which is then acetylated by TRI3, producing calonectrin. A third hydroxyl group is added at C-4 by the cytochrome P450 monooxygenase TRI13, converting calonectrin to 3,15-diacetoxyspirpenol, which is subsequently acetylated bythe acetyltransferase TRI7. A fourth hydroxyl group is added to C-8 by the cytochrome P450 monooxygenase TRI1, followed by the addition of an isovaleryl moiety by TRI16. Finally, the acetyl group is removed from the C-3 position by the trichothecene C-3 esterase TRI8 to produce T-2 toxin. This Fusarium sporotrichioides protein is Core trichothecene cluster (CTC) protein 14.